The primary structure comprises 234 residues: Adenosine 5'-phosphosulfate reductase (234 aa).

[4Fe-4S] cluster contacts are provided by cysteine 120, cysteine 121, cysteine 203, and cysteine 206. Catalysis depends on cysteine 229, which acts as the Nucleophile; cysteine thiosulfonate intermediate.

This sequence belongs to the PAPS reductase family. CysH subfamily. [4Fe-4S] cluster is required as a cofactor.

The protein localises to the cytoplasm. It catalyses the reaction [thioredoxin]-disulfide + sulfite + AMP + 2 H(+) = adenosine 5'-phosphosulfate + [thioredoxin]-dithiol. It participates in sulfur metabolism; hydrogen sulfide biosynthesis; sulfite from sulfate. In terms of biological role, catalyzes the formation of sulfite from adenosine 5'-phosphosulfate (APS) using thioredoxin as an electron donor. The protein is Adenosine 5'-phosphosulfate reductase of Bacillus thuringiensis subsp. konkukian (strain 97-27).